The primary structure comprises 629 residues: tRNA uridine 5-carboxymethylaminomethyl modification enzyme MnmG (629 aa).

FAD-binding positions include 13–18, Val-125, and Ser-180; that span reads GGGHAG. 273-287 is a binding site for NAD(+); that stretch reads GPRYCPSIEDKVMRF. Gln-370 is an FAD binding site.

It belongs to the MnmG family. In terms of assembly, homodimer. Heterotetramer of two MnmE and two MnmG subunits. FAD serves as cofactor.

It localises to the cytoplasm. In terms of biological role, NAD-binding protein involved in the addition of a carboxymethylaminomethyl (cmnm) group at the wobble position (U34) of certain tRNAs, forming tRNA-cmnm(5)s(2)U34. This Escherichia coli O127:H6 (strain E2348/69 / EPEC) protein is tRNA uridine 5-carboxymethylaminomethyl modification enzyme MnmG.